Here is a 397-residue protein sequence, read N- to C-terminus: Acylalkylpyrone synthase csyB (397 aa).

CoA contacts are provided by residues Lys50 and 50–57; that span reads KMLEINRK. Catalysis depends on Cys155, which acts as the Nucleophile. Position 214–215 (214–215) interacts with substrate; that stretch reads GD. Residues Ile267, Gly312, 312–315, Tyr314, and Ala315 each bind CoA; that span reads GGYA. Residue His377 is part of the active site.

This sequence belongs to the thiolase-like superfamily. Chalcone/stilbene synthases family. In terms of assembly, homodimer.

Its function is as follows. Acylalkylpyrone synthase that catalyzes not only the polyketide chain elongation but also the one-pot condensation of two beta-ketoacyl units to produce the 3-acyl-4-hydroxy-6-alkyl-alpha-pyrone (AcAP) scaffold, a precursor of csypyrone B. The enzyme reaction is initiated by the loading of acetoacetyl-CoA onto Cys-155, and subsequent thioester bond cleavage by the nucleophilic water generates the beta-keto acid intermediate, which is placed within a pocket. The second beta-ketoacyl unit is then produced by polyketide chain elongation of fatty acyl-CoA with one molecule of malonyl-CoA, and the condensation with the beta-ketoacid generates the final products. Csypyrone B1 is the major product and contains a propanoic acid side-chain, whereas csypyrones B2 and B3 are minor compounds that contain butyric or pentanoic acid side-chains, respectively. This Aspergillus oryzae (strain ATCC 42149 / RIB 40) (Yellow koji mold) protein is Acylalkylpyrone synthase csyB.